The primary structure comprises 568 residues: 2-succinyl-5-enolpyruvyl-6-hydroxy-3-cyclohexene-1-carboxylate synthase (568 aa).

This sequence belongs to the TPP enzyme family. MenD subfamily. As to quaternary structure, homodimer. Mg(2+) is required as a cofactor. Requires Mn(2+) as cofactor. The cofactor is thiamine diphosphate.

The catalysed reaction is isochorismate + 2-oxoglutarate + H(+) = 5-enolpyruvoyl-6-hydroxy-2-succinyl-cyclohex-3-ene-1-carboxylate + CO2. It functions in the pathway quinol/quinone metabolism; 1,4-dihydroxy-2-naphthoate biosynthesis; 1,4-dihydroxy-2-naphthoate from chorismate: step 2/7. The protein operates within quinol/quinone metabolism; menaquinone biosynthesis. Functionally, catalyzes the thiamine diphosphate-dependent decarboxylation of 2-oxoglutarate and the subsequent addition of the resulting succinic semialdehyde-thiamine pyrophosphate anion to isochorismate to yield 2-succinyl-5-enolpyruvyl-6-hydroxy-3-cyclohexene-1-carboxylate (SEPHCHC). The polypeptide is 2-succinyl-5-enolpyruvyl-6-hydroxy-3-cyclohexene-1-carboxylate synthase (Haemophilus influenzae (strain PittEE)).